A 175-amino-acid chain; its full sequence is Protein LAZY 3 (175 aa).

A disordered region spans residues 9-39 (RKLSGKKRVPTSDSSQEPSSPPLSKEVQGLP). The IGT motif signature appears at 44–50 (TFLAIGT).

This sequence belongs to the LAZY family. In terms of tissue distribution, specifically expressed in roots. Expressed in root tips of young seedlings.

Functionally, involved in the regulation of root gravitropism. Functions redundantly with LAZY2 and LAZY4 in the control of root gravitropism. Functions redundantly with LAZY1, LAZY2 and LAZY4 to control plant architecture by coupling gravity sensing to the formation of auxin gradients. The chain is Protein LAZY 3 from Arabidopsis thaliana (Mouse-ear cress).